The sequence spans 270 residues: Cyclase-like protein 3 (270 aa).

Residues 1 to 23 (MMAHLAPLFLLLLLLLLPLHAAA) form the signal peptide.

The protein belongs to the Cyclase 1 superfamily. Highly expressed in leaf sheaths. leaf collars and flag leaves. Expressed in roots, stems, glumes, young panicles and pistils.

It is found in the secreted. The protein localises to the extracellular space. Its subcellular location is the extracellular matrix. Its function is as follows. May be involved in response to stresses. The chain is Cyclase-like protein 3 from Oryza sativa subsp. japonica (Rice).